The sequence spans 980 residues: Ras and Rab interactor 3 (980 aa).

Positions 1 to 40 (MRRAEAPSSAHPAGPIPDAGKGEGEEDEEKDGTRLGLSTT) are disordered. An SH2 domain is found at 63–158 (WLQLGLGQAE…LLPFTLRLPQ (96 aa)). Residues 247-260 (PLPTGSYPPRPTPA) show a composition bias toward pro residues. Disordered stretches follow at residues 247 to 496 (PLPT…TGAS) and 509 to 560 (QHLQ…LEFS). The segment covering 261-271 (TPDATSPTSKG) has biased composition (low complexity). Residues 274-308 (RRPPPPPPLPTVPPTGPARPLAPPVPPAGPLPNSP) are compositionally biased toward pro residues. 2 stretches are compositionally biased toward polar residues: residues 406–422 (ISRT…TVSS) and 484–494 (QEASSEKQATG). Positions 514–523 (QSSSCPQSSP) are enriched in low complexity. Residues 584 to 729 (FASVFHAFLS…TTTDLGVTTS (146 aa)) are interaction with RAB5B. Residues 700-843 (HSRDGSLQQL…IKNYDKITVT (144 aa)) enclose the VPS9 domain. A Ras-associating domain is found at 865-962 (KARASRSSVQ…FHFVYRPQDS (98 aa)).

This sequence belongs to the RIN (Ras interaction/interference) family. As to quaternary structure, interacts with CD2AP, RAB5B, RAB31 and BIN1.

The protein resides in the cytoplasm. It localises to the cytoplasmic vesicle. The protein localises to the early endosome. In terms of biological role, ras effector protein that functions as a guanine nucleotide exchange (GEF) for RAB5B and RAB31, by exchanging bound GDP for free GTP. Required for normal RAB31 function. The chain is Ras and Rab interactor 3 (Rin3) from Mus musculus (Mouse).